The following is a 180-amino-acid chain: NAD(P)H-quinone oxidoreductase subunit I, chloroplastic (180 aa).

4Fe-4S ferredoxin-type domains follow at residues 55–84 (GRIHFEFDKCIACEVCVRVCPIDLPVVDWR) and 95–124 (LNYSIDFGICIFCGNCVEYCPTNCLSMTEE). Residues Cys-64, Cys-67, Cys-70, Cys-74, Cys-104, Cys-107, Cys-110, and Cys-114 each contribute to the [4Fe-4S] cluster site.

Belongs to the complex I 23 kDa subunit family. As to quaternary structure, NDH is composed of at least 16 different subunits, 5 of which are encoded in the nucleus. Requires [4Fe-4S] cluster as cofactor.

The protein localises to the plastid. It is found in the chloroplast thylakoid membrane. The catalysed reaction is a plastoquinone + NADH + (n+1) H(+)(in) = a plastoquinol + NAD(+) + n H(+)(out). It catalyses the reaction a plastoquinone + NADPH + (n+1) H(+)(in) = a plastoquinol + NADP(+) + n H(+)(out). NDH shuttles electrons from NAD(P)H:plastoquinone, via FMN and iron-sulfur (Fe-S) centers, to quinones in the photosynthetic chain and possibly in a chloroplast respiratory chain. The immediate electron acceptor for the enzyme in this species is believed to be plastoquinone. Couples the redox reaction to proton translocation, and thus conserves the redox energy in a proton gradient. The sequence is that of NAD(P)H-quinone oxidoreductase subunit I, chloroplastic from Liriodendron tulipifera (Tuliptree).